The chain runs to 445 residues: Beclin-1 (445 aa).

The BH3 signature appears at 103–122 (TMENLSRRLKVTGDLFDIMS). Residues 137–264 (DTLLDQLDTQ…QLDKLKKTNV (128 aa)) adopt a coiled-coil conformation. Residues 240 to 445 (DDLKSVENQM…AWVSSQFYNK (206 aa)) are evolutionary conserved domain (ECD). Residues 420–445 (WTKALKFMLTNLKWGLAWVSSQFYNK) are required for membrane-association.

This sequence belongs to the beclin family. As to quaternary structure, component of the PI3K (PI3KC3/PI3K-III/class III phosphatidylinositol 3-kinase) complex. In terms of processing, may be proteolytically processed by caspases; the C-terminal fragment(s) may induce apoptosis.

It localises to the cytoplasm. The protein localises to the golgi apparatus. Its subcellular location is the trans-Golgi network membrane. The protein resides in the endosome membrane. It is found in the endoplasmic reticulum membrane. It localises to the mitochondrion membrane. The protein localises to the cytoplasmic vesicle. Its subcellular location is the autophagosome. Functionally, plays a central role in autophagy. Acts as core subunit of different PI3K complex forms that mediate formation of phosphatidylinositol 3-phosphate and are believed to play a role in multiple membrane trafficking pathways: PI3KC3-C1 is involved in initiation of autophagosomes and PI3KC3-C2 in maturation of autophagosomes and endocytosis. Involved in regulation of degradative endocytic trafficking and required for the abscission step in cytokinesis, probably in the context of PI3KC3-C2. Essential for the formation of PI3KC3-C2 but not PI3KC3-C1 PI3K complex forms. Involved in endocytosis including endosome formation in neuronal cells. The protein is Beclin-1 (becn1) of Xenopus tropicalis (Western clawed frog).